The primary structure comprises 127 residues: MSKPKRERSLPDNEAKAVARMLRVSPQKLNLVAQLIRGRKASAALADLAFSRKRIAVDVKKCLESAIANAENNHDLDVDALVVSEAHVGKGIVMKRFTPRGRGRSGRIFKPFAQLTIVVRQVEEASA.

As to quaternary structure, part of the 50S ribosomal subunit.

This protein binds specifically to 23S rRNA; its binding is stimulated by other ribosomal proteins, e.g. L4, L17, and L20. It is important during the early stages of 50S assembly. It makes multiple contacts with different domains of the 23S rRNA in the assembled 50S subunit and ribosome. Its function is as follows. The globular domain of the protein is located near the polypeptide exit tunnel on the outside of the subunit, while an extended beta-hairpin is found that lines the wall of the exit tunnel in the center of the 70S ribosome. The polypeptide is Large ribosomal subunit protein uL22 (Rhodopseudomonas palustris (strain ATCC BAA-98 / CGA009)).